A 204-amino-acid chain; its full sequence is Holliday junction branch migration complex subunit RuvA (204 aa).

Positions 1–65 are domain I; the sequence is MIGRLRGAVA…SAGLRLYGFG (65 aa). Residues 66 to 142 form a domain II region; the sequence is TREDRRAFVL…PITDGPVLMT (77 aa). The tract at residues 143–152 is flexible linker; it reads APGAVAAAPA. Positions 152–204 are domain III; the sequence is AKAAPTGDAVAALMGLGVAEVNARRVVEAAAAKLGDEATVQALIKAGLQELGR.

This sequence belongs to the RuvA family. As to quaternary structure, homotetramer. Forms an RuvA(8)-RuvB(12)-Holliday junction (HJ) complex. HJ DNA is sandwiched between 2 RuvA tetramers; dsDNA enters through RuvA and exits via RuvB. An RuvB hexamer assembles on each DNA strand where it exits the tetramer. Each RuvB hexamer is contacted by two RuvA subunits (via domain III) on 2 adjacent RuvB subunits; this complex drives branch migration. In the full resolvosome a probable DNA-RuvA(4)-RuvB(12)-RuvC(2) complex forms which resolves the HJ.

Its subcellular location is the cytoplasm. The RuvA-RuvB-RuvC complex processes Holliday junction (HJ) DNA during genetic recombination and DNA repair, while the RuvA-RuvB complex plays an important role in the rescue of blocked DNA replication forks via replication fork reversal (RFR). RuvA specifically binds to HJ cruciform DNA, conferring on it an open structure. The RuvB hexamer acts as an ATP-dependent pump, pulling dsDNA into and through the RuvAB complex. HJ branch migration allows RuvC to scan DNA until it finds its consensus sequence, where it cleaves and resolves the cruciform DNA. This is Holliday junction branch migration complex subunit RuvA from Caulobacter sp. (strain K31).